The chain runs to 165 residues: SPbeta prophage-derived uncharacterized protein YorR (165 aa).

This chain is SPbeta prophage-derived uncharacterized protein YorR (yorR), found in Bacillus subtilis (strain 168).